A 1124-amino-acid polypeptide reads, in one-letter code: Phytochrome A (1124 aa).

Over residues 1–19 the composition is skewed to low complexity; the sequence is MSTTRPSQSSNNSGRSRNS. The segment at 1 to 21 is disordered; that stretch reads MSTTRPSQSSNNSGRSRNSAR. The 184-residue stretch at 218 to 401 folds into the GAF domain; that stretch reads SMERLCDTMV…VFAIHVNKEI (184 aa). Residue cysteine 323 participates in phytochromobilin binding. PAS domains are found at residues 617-687 and 750-821; these read VTSE…LQGE and DYKA…VNFG. In terms of domain architecture, Histidine kinase spans 901–1120; it reads YMKRQIRNPL…ILSVELAAAH (220 aa).

It belongs to the phytochrome family. As to quaternary structure, homodimer. Contains one covalently linked phytochromobilin chromophore.

Regulatory photoreceptor which exists in two forms that are reversibly interconvertible by light: the Pr form that absorbs maximally in the red region of the spectrum and the Pfr form that absorbs maximally in the far-red region. Photoconversion of Pr to Pfr induces an array of morphogenic responses, whereas reconversion of Pfr to Pr cancels the induction of those responses. Pfr controls the expression of a number of nuclear genes including those encoding the small subunit of ribulose-bisphosphate carboxylase, chlorophyll A/B binding protein, protochlorophyllide reductase, rRNA, etc. It also controls the expression of its own gene(s) in a negative feedback fashion. This chain is Phytochrome A (PHYA), found in Pisum sativum (Garden pea).